We begin with the raw amino-acid sequence, 150 residues long: MEKRKDTKTTLAKASDDRNKAWYVVNAEGKTLGRLSSEVAKILRGKHKVTFTPHVAMGDGVIVINAEKVRLTGAKRAQKVYHYYTGFISGMREVPFENMIARKPAYVIEHAVKGMLPKTKLGRRQMKSLRVLKGSSYAQYEAIKPIVLDA.

The protein belongs to the universal ribosomal protein uL13 family. Part of the 50S ribosomal subunit.

Functionally, this protein is one of the early assembly proteins of the 50S ribosomal subunit, although it is not seen to bind rRNA by itself. It is important during the early stages of 50S assembly. This Chlamydia trachomatis serovar A (strain ATCC VR-571B / DSM 19440 / HAR-13) protein is Large ribosomal subunit protein uL13.